The primary structure comprises 244 residues: Small ribosomal subunit protein uS3 (244 aa).

Residues 39-107 (IRELIKKESF…KLIINVEEIK (69 aa)) enclose the KH type-2 domain. The tract at residues 216 to 244 (LPVYKNKKNDKNKKRRNNNRKGKSQAAKN) is disordered. A compositionally biased stretch (basic residues) spans 220-238 (KNKKNDKNKKRRNNNRKGK).

This sequence belongs to the universal ribosomal protein uS3 family. As to quaternary structure, part of the 30S ribosomal subunit. Forms a tight complex with proteins S10 and S14.

Binds the lower part of the 30S subunit head. Binds mRNA in the 70S ribosome, positioning it for translation. This chain is Small ribosomal subunit protein uS3, found in Finegoldia magna (strain ATCC 29328 / DSM 20472 / WAL 2508) (Peptostreptococcus magnus).